The primary structure comprises 127 residues: Small ribosomal subunit protein uS11 (127 aa).

It belongs to the universal ribosomal protein uS11 family. In terms of assembly, part of the 30S ribosomal subunit. Interacts with proteins S7 and S18. Binds to IF-3.

In terms of biological role, located on the platform of the 30S subunit, it bridges several disparate RNA helices of the 16S rRNA. Forms part of the Shine-Dalgarno cleft in the 70S ribosome. In Streptococcus gordonii (strain Challis / ATCC 35105 / BCRC 15272 / CH1 / DL1 / V288), this protein is Small ribosomal subunit protein uS11.